The primary structure comprises 441 residues: Enolase (441 aa).

Q164 contacts (2R)-2-phosphoglycerate. The active-site Proton donor is E206. Residues D243, E289, and D316 each coordinate Mg(2+). (2R)-2-phosphoglycerate contacts are provided by K341, R370, S371, and K392. The active-site Proton acceptor is K341.

The protein belongs to the enolase family. Requires Mg(2+) as cofactor.

It is found in the cytoplasm. The protein localises to the secreted. It localises to the cell surface. It catalyses the reaction (2R)-2-phosphoglycerate = phosphoenolpyruvate + H2O. It participates in carbohydrate degradation; glycolysis; pyruvate from D-glyceraldehyde 3-phosphate: step 4/5. In terms of biological role, catalyzes the reversible conversion of 2-phosphoglycerate (2-PG) into phosphoenolpyruvate (PEP). It is essential for the degradation of carbohydrates via glycolysis. In Leuconostoc citreum (strain KM20), this protein is Enolase.